Consider the following 82-residue polypeptide: MLGFGPFELILIVVIIALLFGARKLPELGKGMGRGIKEFKQEMHEPSPPRPQVTDIPSQRLDPVTGAPVSTESTVPASDRRS.

Residues 1–21 form a helical membrane-spanning segment; the sequence is MLGFGPFELILIVVIIALLFG. Basic and acidic residues predominate over residues 36–47; the sequence is IKEFKQEMHEPS. The tract at residues 36–82 is disordered; sequence IKEFKQEMHEPSPPRPQVTDIPSQRLDPVTGAPVSTESTVPASDRRS.

The protein belongs to the TatA/E family. Forms a complex with TatC.

Its subcellular location is the cell membrane. In terms of biological role, part of the twin-arginine translocation (Tat) system that transports large folded proteins containing a characteristic twin-arginine motif in their signal peptide across membranes. TatA could form the protein-conducting channel of the Tat system. This is Sec-independent protein translocase protein TatA from Deinococcus deserti (strain DSM 17065 / CIP 109153 / LMG 22923 / VCD115).